Reading from the N-terminus, the 281-residue chain is Aldo-keto reductase MMAR_1744 (281 aa).

Tyr-56 acts as the Proton donor in catalysis. NADPH is bound by residues Leu-196, Ile-234, Ser-237, Thr-245, Asn-246, and Arg-272.

The protein belongs to the aldo/keto reductase family.

The protein is Aldo-keto reductase MMAR_1744 of Mycobacterium marinum (strain ATCC BAA-535 / M).